We begin with the raw amino-acid sequence, 25 residues long: Aurein-5.1 (25 aa).

The protein belongs to the frog skin active peptide (FSAP) family. Aurein subfamily. As to expression, expressed by the skin dorsal glands.

It is found in the secreted. Functionally, has no antimicrobial or anticancer activity. This is Aurein-5.1 from Ranoidea aurea (Green and golden bell frog).